A 359-amino-acid chain; its full sequence is N-acetylhexosamine 1-kinase (359 aa).

In terms of domain architecture, Protein kinase spans 21–359 (VTGIEPYGDG…IVADIMEAAR (339 aa)).

Belongs to the protein kinase superfamily. Requires Mg(2+) as cofactor.

The catalysed reaction is N-acetyl-D-hexosamine + ATP = N-acetyl-alpha-D-hexosamine 1-phosphate + ADP + H(+). Its function is as follows. Phosphorylates both N-acetylglucosamine (GlcNAc) and N-acetylgalactosamine (GalNAc) at similar rates. Involved in the lacto-N-biose I/galacto-N-biose (LNB/GNB) degradation pathway, which is important for host intestinal colonization by bifidobacteria. Also accepts GTP and ITP as phosphate donors. In vitro, can phosphorylate several GlcNAc and GalNAc derivatives. The protein is N-acetylhexosamine 1-kinase (nahK) of Bifidobacterium longum subsp. longum (strain ATCC 15707 / DSM 20219 / JCM 1217 / NCTC 11818 / E194b).